Reading from the N-terminus, the 291-residue chain is Secretory carrier-associated membrane protein 5 (291 aa).

Basic and acidic residues predominate over residues 1-10; the sequence is MGGRYDRNTF. Positions 1 to 66 are disordered; sequence MGGRYDRNTF…GSGAQDLKKK (66 aa). Residues 1 to 126 are Cytoplasmic-facing; the sequence is MGGRYDRNTF…EILVRLQRLQ (126 aa). Ser-34 carries the phosphoserine modification. A coiled-coil region spans residues 58–94; it reads SGAQDLKKKEKELQAKEADLRRREQDLKRKQDAAARA. The next 4 helical transmembrane spans lie at 127–147, 159–179, 194–214, and 242–262; these read YIAF…IIAV, IWLL…VLWY, FGWF…AAVA, and IFYF…IWVI. The Cytoplasmic segment spans residues 263 to 288; it reads QQVYMYFRGSGKADDMRRDAARGAMR.

It belongs to the SCAMP family.

It localises to the cell membrane. It is found in the cytoplasmic vesicle. The protein resides in the secretory vesicle membrane. Probably involved in membrane trafficking. This is Secretory carrier-associated membrane protein 5 (SCAMP5) from Arabidopsis thaliana (Mouse-ear cress).